A 205-amino-acid polypeptide reads, in one-letter code: Small ribosomal subunit protein uS4 (205 aa).

The S4 RNA-binding domain maps to 91–149 (MRLDALVLRAAFARSISQARQLVVHRHILVDGKLVDRPSYSVSPGQTVKVKPKSVPLDP).

Belongs to the universal ribosomal protein uS4 family. As to quaternary structure, part of the 30S ribosomal subunit. Contacts protein S5. The interaction surface between S4 and S5 is involved in control of translational fidelity.

Its function is as follows. One of the primary rRNA binding proteins, it binds directly to 16S rRNA where it nucleates assembly of the body of the 30S subunit. With S5 and S12 plays an important role in translational accuracy. This is Small ribosomal subunit protein uS4 from Tropheryma whipplei (strain TW08/27) (Whipple's bacillus).